The following is a 207-amino-acid chain: Large ribosomal subunit protein uL3 (207 aa).

The interval 129–152 (AGGPAGHGSRFQRHPGSIGSNTTP) is disordered.

It belongs to the universal ribosomal protein uL3 family. As to quaternary structure, part of the 50S ribosomal subunit. Forms a cluster with proteins L14 and L19.

Its function is as follows. One of the primary rRNA binding proteins, it binds directly near the 3'-end of the 23S rRNA, where it nucleates assembly of the 50S subunit. The polypeptide is Large ribosomal subunit protein uL3 (Leptospira biflexa serovar Patoc (strain Patoc 1 / ATCC 23582 / Paris)).